The primary structure comprises 488 residues: RNA binding exosome specificity factor Mmi1 (488 aa).

Polar residues-rich tracts occupy residues 1 to 14, 33 to 47, and 54 to 66; these read MSNT…SSKS, LNES…TTHT, and SVLS…NFSS. 2 disordered regions span residues 1-20 and 25-80; these read MSNT…ELPN and RSLW…DAPI. Basic and acidic residues predominate over residues 71 to 80; the sequence is PAPESHDAPI. Residues 95-122 are interaction with erh1; the sequence is GKYDFSRHCTDYGHSYEWPYFRSLRRES. Disordered regions lie at residues 163 to 185 and 225 to 261; these read SRLH…RRLA and SYPV…TRAS. Position 176 is a phosphothreonine (Thr-176). A phosphoserine mark is found at Ser-178, Ser-230, Ser-231, Ser-261, Ser-263, and Ser-265. Positions 289–299 are enriched in low complexity; sequence SYLLSNSSNDS. A disordered region spans residues 289–328; sequence SYLLSNSSNDSASRKEKPKARASTPPPLNFSRASEHRNEK. Residue Ser-311 is modified to Phosphoserine. At Thr-312 the chain carries Phosphothreonine. The YTH domain occupies 350 to 476; sequence SRYFIMLCDN…DEGSRLCTLI (127 aa).

Component of the erh1-mmi1 complex composed of mmi1 and erh1. Interacts (via N-terminus) with erh1 in a 2:2 stoichiometry. Interacts with rrp6.

Its subcellular location is the nucleus. Its function is as follows. RNA-binding protein that recognizes and binds N6-methyladenosine (m6A)-containing RNAs, a modification present at internal sites of mRNAs and some non-coding RNAs. Functions alone and as part of the erh1-mmi1 complex, to recruit the CCR4-NOT complex and the NURS complex to target RNAs. Suppresses the meiotic program during vegetative growth and promotes the meiotic program during mating. Binds to DSR (determinant of selective removal) regions in meiotic mRNA, and recruits the NURS complex to targets. Recruitment of NURS complex to target mRNAs promotes mRNA decay by engagement of the nuclear exosome, and formation of heterochromatin islands at meiotic genes silenced by the exosome. Recruitment of the CCR4-NOT complex to target RNAs promotes heterochromatin formation at RNAi-dependent heterochromatin domains (HOODs), including a subset of meiotic genes, lncRNAs and retrotransposons. Recruitment of the CCR4-NOT complex to rDNA promotes rDNA heterochromatin assembly. Promotes non-canonical transcription termination at meiotic genes and prevents lncRNA transcription from invading and repressing adjacent genes. This Schizosaccharomyces pombe (strain 972 / ATCC 24843) (Fission yeast) protein is RNA binding exosome specificity factor Mmi1 (mmi1).